Reading from the N-terminus, the 306-residue chain is MLNYVLKRLLGLIPTLLIVAVLVFLFVHLLPGDPARLIAGPEADAQVIALVRQQLGLDQPLHVQFWRYITHVLQGDFGTSMVSRRPVSEEIASRFLPTLWLTITSMIWAVLFGMAIGIAAAVWRNRWPDRLGMTLAVTGISFPAFALGMLLMQIFSVDLGWLPTVGADSWQHYILPSLTLGAAVASVMARFTRSSFVDVLSEDYMRTARAKGVSETWVVLKHGLRNAMIPVVTMMGLQFGFLLGGSIVVEKVFNWPGLGRLLVDSVDMRDYPVIQAEVLLFSLEFILINLVVDVLYAAINPAIRYK.

Residues 1–8 (MLNYVLKR) lie on the Cytoplasmic side of the membrane. A helical membrane pass occupies residues 9 to 29 (LLGLIPTLLIVAVLVFLFVHL). At 30–102 (LPGDPARLIA…SRFLPTLWLT (73 aa)) the chain is on the periplasmic side. An ABC transmembrane type-1 domain is found at 95 to 292 (FLPTLWLTIT…LEFILINLVV (198 aa)). The helical transmembrane segment at 103–123 (ITSMIWAVLFGMAIGIAAAVW) threads the bilayer. The Cytoplasmic portion of the chain corresponds to 124–134 (RNRWPDRLGMT). A helical transmembrane segment spans residues 135-155 (LAVTGISFPAFALGMLLMQIF). Residues 156-168 (SVDLGWLPTVGAD) are Periplasmic-facing. The helical transmembrane segment at 169–189 (SWQHYILPSLTLGAAVASVMA) threads the bilayer. The Cytoplasmic segment spans residues 190-228 (RFTRSSFVDVLSEDYMRTARAKGVSETWVVLKHGLRNAM). A helical transmembrane segment spans residues 229–249 (IPVVTMMGLQFGFLLGGSIVV). Residues 250–278 (EKVFNWPGLGRLLVDSVDMRDYPVIQAEV) are Periplasmic-facing. The chain crosses the membrane as a helical span at residues 279–299 (LLFSLEFILINLVVDVLYAAI). Over 300 to 306 (NPAIRYK) the chain is Cytoplasmic.

Belongs to the binding-protein-dependent transport system permease family. In terms of assembly, the complex is composed of two ATP-binding proteins (GsiA), two transmembrane proteins (GsiC and GsiD) and a solute-binding protein (GsiB).

The protein resides in the cell inner membrane. Its function is as follows. Part of the ABC transporter complex GsiABCD involved in glutathione import. Probably responsible for the translocation of the substrate across the membrane. This is Glutathione transport system permease protein GsiC from Salmonella paratyphi A (strain ATCC 9150 / SARB42).